Here is a 65-residue protein sequence, read N- to C-terminus: Large ribosomal subunit protein bL35 (65 aa).

Residues 1-26 (MPKIKTVRGAAKRFKKTASGGFKRKQ) are disordered. Basic residues predominate over residues 10 to 26 (AAKRFKKTASGGFKRKQ).

The protein belongs to the bacterial ribosomal protein bL35 family.

This chain is Large ribosomal subunit protein bL35, found in Mannheimia succiniciproducens (strain KCTC 0769BP / MBEL55E).